Reading from the N-terminus, the 879-residue chain is Metabotropic glutamate receptor 3 (879 aa).

Residues 1-22 form the signal peptide; it reads MKMLTRLQVLMLALFSKGFLVS. Residues 23-576 are Extracellular-facing; sequence LGDHNFMRRE…EDYIRWEDAW (554 aa). Cysteines 57 and 99 form a disulfide. Residues serine 151 and 172–174 contribute to the L-glutamate site; that span reads AST. Asparagine 209 carries an N-linked (GlcNAc...) asparagine glycan. Tyrosine 222 is a binding site for L-glutamate. Cystine bridges form between cysteine 240–cysteine 527, cysteine 361–cysteine 373, cysteine 412–cysteine 419, cysteine 509–cysteine 528, cysteine 513–cysteine 531, cysteine 534–cysteine 546, and cysteine 549–cysteine 562. Asparagine 292 carries N-linked (GlcNAc...) asparagine glycosylation. Aspartate 301 is an L-glutamate binding site. Residue lysine 389 participates in L-glutamate binding. N-linked (GlcNAc...) asparagine glycans are attached at residues asparagine 414 and asparagine 439. The helical transmembrane segment at 577–599 threads the bilayer; it reads AIGPVTIACLGFMCTCIVITVFI. The Cytoplasmic portion of the chain corresponds to 600–613; it reads KHNNTPLVKASGRE. The chain crosses the membrane as a helical span at residues 614–634; sequence LCYILLFGVSLSYCMTFFFIA. Residues 635–645 lie on the Extracellular side of the membrane; it reads KPSPVICALRR. A helical membrane pass occupies residues 646–664; the sequence is LGLGTSFAICYSALLTKTN. The Cytoplasmic portion of the chain corresponds to 665-688; it reads CIARIFDGVKNGAQRPKFISPSSQ. A helical transmembrane segment spans residues 689-709; that stretch reads VFICLGLILVQIVMVSVWLIL. At 710–734 the chain is on the extracellular side; it reads ETPGTRRYTLPEKRETVILKCNVKD. Residues 735–756 traverse the membrane as a helical segment; it reads SSMLISLTYDVVLVILCTVYAF. The Cytoplasmic segment spans residues 757 to 769; the sequence is KTRKCPENFNEAK. Residues 770 to 792 traverse the membrane as a helical segment; it reads FIGFTMYTTCIIWLAFLPIFYVT. The Extracellular portion of the chain corresponds to 793–802; sequence SSDYRVQTTT. The helical transmembrane segment at 803 to 828 threads the bilayer; sequence MCISVSLSGFVVLGCLFAPKVHIVLF. The Cytoplasmic segment spans residues 829–879; that stretch reads QPQKNVVTHRLHLNRFSVSGTATTYSQSSASTYVPTVCNGREVLDSTTSSL.

The protein belongs to the G-protein coupled receptor 3 family. Interacts with TAMALIN.

The protein resides in the cell membrane. Functionally, G-protein coupled receptor for glutamate. Ligand binding causes a conformation change that triggers signaling via guanine nucleotide-binding proteins (G proteins) and modulates the activity of down-stream effectors. Signaling inhibits adenylate cyclase activity. The sequence is that of Metabotropic glutamate receptor 3 (Grm3) from Mus musculus (Mouse).